The primary structure comprises 239 residues: 1-(5-phosphoribosyl)-5-[(5-phosphoribosylamino)methylideneamino] imidazole-4-carboxamide isomerase (239 aa).

The Proton acceptor role is filled by Asp-8. Asp-129 (proton donor) is an active-site residue.

The protein belongs to the HisA/HisF family.

Its subcellular location is the cytoplasm. It carries out the reaction 1-(5-phospho-beta-D-ribosyl)-5-[(5-phospho-beta-D-ribosylamino)methylideneamino]imidazole-4-carboxamide = 5-[(5-phospho-1-deoxy-D-ribulos-1-ylimino)methylamino]-1-(5-phospho-beta-D-ribosyl)imidazole-4-carboxamide. The protein operates within amino-acid biosynthesis; L-histidine biosynthesis; L-histidine from 5-phospho-alpha-D-ribose 1-diphosphate: step 4/9. This chain is 1-(5-phosphoribosyl)-5-[(5-phosphoribosylamino)methylideneamino] imidazole-4-carboxamide isomerase, found in Bacillus anthracis (strain A0248).